Here is a 112-residue protein sequence, read N- to C-terminus: Large ribosomal subunit protein eL31 (112 aa).

It belongs to the eukaryotic ribosomal protein eL31 family. Component of the large ribosomal subunit. Mature ribosomes consist of a small (40S) and a large (60S) subunit. The 40S subunit contains about 32 different proteins and 1 molecule of RNA (18S). The 60S subunit contains 45 different proteins and 3 molecules of RNA (25S, 5.8S and 5S).

It is found in the cytoplasm. Its function is as follows. Component of the ribosome, a large ribonucleoprotein complex responsible for the synthesis of proteins in the cell. The small ribosomal subunit (SSU) binds messenger RNAs (mRNAs) and translates the encoded message by selecting cognate aminoacyl-transfer RNA (tRNA) molecules. The large subunit (LSU) contains the ribosomal catalytic site termed the peptidyl transferase center (PTC), which catalyzes the formation of peptide bonds, thereby polymerizing the amino acids delivered by tRNAs into a polypeptide chain. The nascent polypeptides leave the ribosome through a tunnel in the LSU and interact with protein factors that function in enzymatic processing, targeting, and the membrane insertion of nascent chains at the exit of the ribosomal tunnel. The chain is Large ribosomal subunit protein eL31 from Candida albicans (strain SC5314 / ATCC MYA-2876) (Yeast).